Reading from the N-terminus, the 264-residue chain is Signal peptidase I (264 aa).

The Cytoplasmic portion of the chain corresponds to 1–18 (MNRDNTKTNKTVKQEFAS). A helical membrane pass occupies residues 19 to 39 (FTFVICIALVIRILIMEPFTV). Residues 40 to 264 (PTGSMKATIL…IFKNLYNVDE (225 aa)) lie on the Periplasmic side of the membrane. Residues serine 43 and lysine 106 contribute to the active site.

This sequence belongs to the peptidase S26 family.

It is found in the cell inner membrane. It catalyses the reaction Cleavage of hydrophobic, N-terminal signal or leader sequences from secreted and periplasmic proteins.. Its function is as follows. Complements E.coli mutants temperature-sensitive for LepB function. This Rickettsia typhi (strain ATCC VR-144 / Wilmington) protein is Signal peptidase I (lepB).